Here is a 92-residue protein sequence, read N- to C-terminus: MAYRGQGQKVQKVMVQPINLIFRYLQNRSRISVWLYEQVNMRIEGCIIGFDEYMNLVLDDAEEVHMKTKNRKPLGRIMLKGDNITLLQSVSN.

One can recognise a Sm domain in the interval 18–92 (INLIFRYLQN…NITLLQSVSN (75 aa)).

Belongs to the snRNP Sm proteins family. Core component of the spliceosomal U1, U2, U4 and U5 small nuclear ribonucleoproteins (snRNPs), the building blocks of the spliceosome. Most spliceosomal snRNPs contain a common set of Sm proteins, snrpb, snrpd1, snrpd2, snrpd3, snrpe, snrpf and snrpg that assemble in a heptameric protein ring on the Sm site of the small nuclear RNA to form the core snRNP. Component of the U1 snRNP. The U1 snRNP is composed of the U1 snRNA and the 7 core Sm proteins snrpb, snrpd1, snrpd2, snrpd3, snrpe, snrpf and snrpg, and at least three U1 snRNP-specific proteins snrnp70/u1-70k, snrpa/u1-a and snrpc/u1-c. Component of the U4/U6-U5 tri-snRNP complex composed of the U4, U6 and U5 snRNAs and at least prpf3, prpf4, prpf6, prpf8, prpf31, snrnp200, txnl4a, snrnp40, snrpb, snrpd1, snrpd2, snrpd3, snrpe, snrpf, snrpg, ddx23, cd2bp2, ppih, snu13, eftud2, sart1 and usp39, plus lsm2, lsm3, lsm4, lsm5, lsm6, lsm7 and lsm8. Component of the U7 snRNP complex, or U7 Sm protein core complex, that is composed of the U7 snRNA and at least lsm10, lsm11, snrpb, snrpd3, snrpe, snrpf and snrpg; the complex does not contain snrpd1 and snrpd2. Component of the minor spliceosome, which splices U12-type introns. Part of the SMN-Sm complex that contains smn1, gemin2/sip1, ddx20/gemin3, gemin4, gemin5, gemin6, gemin7, gemin8, strap/unrip and the Sm proteins snrpb, snrpd1, snrpd2, snrpd3, snrpe, snrpf and snrpg; catalyzes core snRNPs assembly. Forms a 6S pICln-Sm complex composed of clns1a/pICln, snrpd1, snrpd2, snrpe, snrpf and snrpg; ring-like structure where clns1a/pICln mimics additional Sm proteins and which is unable to assemble into the core snRNP.

The protein resides in the cytoplasm. Its subcellular location is the cytosol. It is found in the nucleus. Functionally, plays a role in pre-mRNA splicing as a core component of the spliceosomal U1, U2, U4 and U5 small nuclear ribonucleoproteins (snRNPs), the building blocks of the spliceosome. Component of both the pre-catalytic spliceosome B complex and activated spliceosome C complexes. As a component of the minor spliceosome, involved in the splicing of U12-type introns in pre-mRNAs. As part of the U7 snRNP it is involved in histone 3'-end processing. The protein is Small nuclear ribonucleoprotein E (snrpe) of Danio rerio (Zebrafish).